The primary structure comprises 291 residues: 2-dehydro-3-deoxyphosphooctonate aldolase 2 (291 aa).

N-acetylalanine is present on Ala-2.

The protein belongs to the KdsA family. Expressed in roots, apical meristem, emerging leaves, hydathodes of young leaves, styles of mature flowers and funicules of mature siliques.

It localises to the cytoplasm. It catalyses the reaction D-arabinose 5-phosphate + phosphoenolpyruvate + H2O = 3-deoxy-alpha-D-manno-2-octulosonate-8-phosphate + phosphate. Its function is as follows. Catalyzes the stereospecific condensation of D-arabinose 5-phosphate and phosphoenolpyruvate to form 3-deoxy-D-manno-octulosonate 8-phosphate (KDO-8-phosphate) and inorganic phosphate. Involved in the biosynthesis of 3-deoxy-D-manno-octulosonate (KDO) which is an indispensable component of rhamnogalacturonan II (RG-II), a structurally complex pectic polysaccharide of the primary cell wall. RG-II is essential for the cell wall integrity of rapidly growing tissues and pollen tube growth and elongation. This is 2-dehydro-3-deoxyphosphooctonate aldolase 2 (KDSA2) from Arabidopsis thaliana (Mouse-ear cress).